Here is a 221-residue protein sequence, read N- to C-terminus: Uridylate kinase (221 aa).

Residue 7–11 (KISGK) coordinates ATP. Glycine 43 provides a ligand contact to UMP. ATP contacts are provided by glycine 44 and arginine 48. UMP contacts are provided by residues aspartate 62 and 109-115 (LQPGQST). 2 residues coordinate ATP: threonine 135 and tyrosine 141.

This sequence belongs to the UMP kinase family. Homohexamer.

Its subcellular location is the cytoplasm. The catalysed reaction is UMP + ATP = UDP + ADP. The protein operates within pyrimidine metabolism; CTP biosynthesis via de novo pathway; UDP from UMP (UMPK route): step 1/1. With respect to regulation, inhibited by UTP. In terms of biological role, catalyzes the reversible phosphorylation of UMP to UDP. The protein is Uridylate kinase of Ignicoccus hospitalis (strain KIN4/I / DSM 18386 / JCM 14125).